The sequence spans 106 residues: Adipokinetic hormone/corazonin-related peptide (106 aa).

The N-terminal stretch at 1 to 25 (MRNSIYKLIMFAVLCMVLTSSLSYA) is a signal peptide. Gln-26 is modified (pyrrolidone carboxylic acid). At Ala-35 the chain carries Alanine amide. Positions 39–106 (SLAEAAQSTG…GLPLFSNGHL (68 aa)) are excised as a propeptide.

This sequence belongs to the AKH/HRTH/RPCH family. In terms of tissue distribution, only expressed in the head and thorax body segments of adults. Is more expressed in adult males than in females.

It is found in the secreted. In terms of biological role, neuropeptide with neuromodulator or neurotransmitter role that activates the adipokinetic hormone/corazonin-related peptide receptor (ACPR). May function in regulation of post-ecdysis activities. Does not activate the A.gambiae adipokinetic hormone (AKH) and corazonin (CRZ) receptors. This Aedes aegypti (Yellowfever mosquito) protein is Adipokinetic hormone/corazonin-related peptide.